Reading from the N-terminus, the 961-residue chain is Gamma-tubulin small complex component GCP2 (961 aa).

A disordered region spans residues 15 to 76 (NLHRSPKLAT…KPSIPPLKSE (62 aa)). Positions 43-54 (LGSNVVSHPTRS) are enriched in polar residues. Residues 55–65 (SPEKTTDKPAD) show a composition bias toward basic and acidic residues.

It belongs to the TUBGCP family. As to quaternary structure, component of the gamma-tubulin small complex (gamma-TuSC) composed of tubulin gamma chain, gamma-tubulin complex protein 2 (GCP2) and gamma-tubulin complex protein 3 (GCP3). Interacts with tubulin gamma chain.

Its subcellular location is the cytoplasm. The protein localises to the cytoskeleton. The protein resides in the flagellum axoneme. It localises to the flagellum basal body. Functionally, component of the gamma-tubulin small complex (gamma-TuSC) involved in microtubule (MT) nucleation for the formation of median bodies and in the biogenesis of flagella. Gamma-TuSC may be required for the correct positioning of EB1 within the trophozoites. The sequence is that of Gamma-tubulin small complex component GCP2 from Giardia intestinalis (strain ATCC 50803 / WB clone C6) (Giardia lamblia).